The following is a 286-amino-acid chain: Large ribosomal subunit protein uL3 (286 aa).

Gln152 is modified (N5-methylglutamine). A compositionally biased stretch (low complexity) spans 246–265; it reads EAAAAAAAAEEQAAMEAAEA. Residues 246–286 are disordered; that stretch reads EAAAAAAAAEEQAAMEAAEAAEAKTDTVAEAEAAEKKEGDA. The span at 266–286 shows a compositional bias: basic and acidic residues; it reads AEAKTDTVAEAEAAEKKEGDA.

Belongs to the universal ribosomal protein uL3 family. Part of the 50S ribosomal subunit. Forms a cluster with proteins L14 and L19. Post-translationally, methylated by PrmB.

In terms of biological role, one of the primary rRNA binding proteins, it binds directly near the 3'-end of the 23S rRNA, where it nucleates assembly of the 50S subunit. The protein is Large ribosomal subunit protein uL3 of Roseobacter denitrificans (strain ATCC 33942 / OCh 114) (Erythrobacter sp. (strain OCh 114)).